We begin with the raw amino-acid sequence, 100 residues long: Urease subunit gamma (100 aa).

The protein belongs to the urease gamma subunit family. As to quaternary structure, heterotrimer of UreA (gamma), UreB (beta) and UreC (alpha) subunits. Three heterotrimers associate to form the active enzyme.

It is found in the cytoplasm. The enzyme catalyses urea + 2 H2O + H(+) = hydrogencarbonate + 2 NH4(+). Its pathway is nitrogen metabolism; urea degradation; CO(2) and NH(3) from urea (urease route): step 1/1. This Allorhizobium ampelinum (strain ATCC BAA-846 / DSM 112012 / S4) (Agrobacterium vitis (strain S4)) protein is Urease subunit gamma.